The following is a 332-amino-acid chain: tRNA uridine(34) hydroxylase (332 aa).

Residues 127-221 (SDPETVLIDT…YLEEVPKEKS (95 aa)) enclose the Rhodanese domain. The Cysteine persulfide intermediate role is filled by Cys-181. The tract at residues 308–332 (AKKLAQLNKQKKQQAKEAARKKAQQ) is disordered. Positions 321–332 (QAKEAARKKAQQ) are enriched in basic and acidic residues.

This sequence belongs to the TrhO family.

It catalyses the reaction uridine(34) in tRNA + AH2 + O2 = 5-hydroxyuridine(34) in tRNA + A + H2O. In terms of biological role, catalyzes oxygen-dependent 5-hydroxyuridine (ho5U) modification at position 34 in tRNAs. This chain is tRNA uridine(34) hydroxylase, found in Francisella tularensis subsp. tularensis (strain FSC 198).